The chain runs to 487 residues: Cytochrome P450 716A75 (487 aa).

A helical membrane pass occupies residues 5–25 (FVSLLSLFLLILLPLSLLFLF). Cys434 provides a ligand contact to heme.

Belongs to the cytochrome P450 family. The cofactor is heme.

The protein localises to the membrane. The enzyme catalyses beta-amyrin + reduced [NADPH--hemoprotein reductase] + O2 = erythrodiol + oxidized [NADPH--hemoprotein reductase] + H2O + H(+). The catalysed reaction is erythrodiol + reduced [NADPH--hemoprotein reductase] + O2 = oleanolic aldehyde + oxidized [NADPH--hemoprotein reductase] + 2 H2O + H(+). It carries out the reaction oleanolic aldehyde + reduced [NADPH--hemoprotein reductase] + O2 = oleanolate + oxidized [NADPH--hemoprotein reductase] + H2O + 2 H(+). Catalyzes the C-28 oxidation of beta-amyrin to form erythrodiol. Catalyzes the C-28 oxidation of erythrodiol to form oleanolic aldehyde. Catalyzes the C-28 oxidation of oleanolic aldehyde to form oleanolate. This Maesa lanceolata (False assegai) protein is Cytochrome P450 716A75.